The following is a 212-amino-acid chain: Thymidylate kinase (212 aa).

An ATP-binding site is contributed by 10 to 17 (GPDGAGKT).

This sequence belongs to the thymidylate kinase family.

The catalysed reaction is dTMP + ATP = dTDP + ADP. Functionally, phosphorylation of dTMP to form dTDP in both de novo and salvage pathways of dTTP synthesis. The sequence is that of Thymidylate kinase from Lactobacillus delbrueckii subsp. bulgaricus (strain ATCC 11842 / DSM 20081 / BCRC 10696 / JCM 1002 / NBRC 13953 / NCIMB 11778 / NCTC 12712 / WDCM 00102 / Lb 14).